Reading from the N-terminus, the 110-residue chain is Large ribosomal subunit protein uL22 (110 aa).

Belongs to the universal ribosomal protein uL22 family. In terms of assembly, part of the 50S ribosomal subunit.

This protein binds specifically to 23S rRNA; its binding is stimulated by other ribosomal proteins, e.g. L4, L17, and L20. It is important during the early stages of 50S assembly. It makes multiple contacts with different domains of the 23S rRNA in the assembled 50S subunit and ribosome. Its function is as follows. The globular domain of the protein is located near the polypeptide exit tunnel on the outside of the subunit, while an extended beta-hairpin is found that lines the wall of the exit tunnel in the center of the 70S ribosome. This Halorhodospira halophila (strain DSM 244 / SL1) (Ectothiorhodospira halophila (strain DSM 244 / SL1)) protein is Large ribosomal subunit protein uL22.